We begin with the raw amino-acid sequence, 858 residues long: Bifunctional uridylyltransferase/uridylyl-removing enzyme (858 aa).

Positions 1 to 324 (MSASVAEPPP…PATSGVTRVL (324 aa)) are uridylyltransferase. Positions 325–681 (SPGRFVEKQG…ARPSPVGDAL (357 aa)) are uridylyl-removing. Positions 443 to 565 (VDQHILMVLR…VGSERRLTAL (123 aa)) constitute an HD domain. ACT domains follow at residues 682–761 (QVLV…PEPS) and 790–858 (ILSV…AIAV).

Belongs to the GlnD family. Requires Mg(2+) as cofactor.

The catalysed reaction is [protein-PII]-L-tyrosine + UTP = [protein-PII]-uridylyl-L-tyrosine + diphosphate. It catalyses the reaction [protein-PII]-uridylyl-L-tyrosine + H2O = [protein-PII]-L-tyrosine + UMP + H(+). Uridylyltransferase (UTase) activity is inhibited by glutamine, while glutamine activates uridylyl-removing (UR) activity. Modifies, by uridylylation and deuridylylation, the PII regulatory proteins (GlnB and homologs), in response to the nitrogen status of the cell that GlnD senses through the glutamine level. Under low glutamine levels, catalyzes the conversion of the PII proteins and UTP to PII-UMP and PPi, while under higher glutamine levels, GlnD hydrolyzes PII-UMP to PII and UMP (deuridylylation). Thus, controls uridylylation state and activity of the PII proteins, and plays an important role in the regulation of nitrogen assimilation and metabolism. This is Bifunctional uridylyltransferase/uridylyl-removing enzyme from Burkholderia pseudomallei (strain 1106a).